The chain runs to 350 residues: CMP-N-acetylneuraminate-beta-galactosamide-alpha-2,3-sialyltransferase 2 (350 aa).

Topologically, residues 1-6 (MKCSLR) are cytoplasmic. Residues 7–27 (VWFLSMAFLLVFIMSLLFTYS) form a helical; Signal-anchor for type II membrane protein membrane-spanning segment. Over 28-350 (HHSMATLPYL…ASKIEVYRGN (323 aa)) the chain is Lumenal. 3 cysteine pairs are disulfide-bonded: C70-C75, C72-C149, and C152-C291. Positions 116, 157, and 180 each coordinate substrate. N-linked (GlcNAc...) asparagine glycosylation is present at N211. 6 residues coordinate substrate: Y240, Y276, G280, G300, H309, and H326.

It belongs to the glycosyltransferase 29 family. In terms of assembly, homodimer; disulfide-linked. Homodimer formation occurs in the endoplasmic reticulum. Post-translationally, the soluble form derives from the membrane form by proteolytic processing. In terms of processing, N-glycosylated; necessary for proper exit from endoplasmic reticulum and trafficking to the Golgi apparatus.

It is found in the golgi apparatus. It localises to the golgi stack membrane. The protein localises to the secreted. The enzyme catalyses a beta-D-galactosyl-(1-&gt;3)-N-acetyl-alpha-D-galactosaminyl derivative + CMP-N-acetyl-beta-neuraminate = an N-acetyl-alpha-neuraminyl-(2-&gt;3)-beta-D-galactosyl-(1-&gt;3)-N-acetyl-alpha-D-galactosaminyl derivative + CMP + H(+). It catalyses the reaction a ganglioside GM1 (d18:1(4E)) + CMP-N-acetyl-beta-neuraminate = a ganglioside GD1a (d18:1(4E)) + CMP + H(+). The catalysed reaction is ganglioside GM1 (d18:1(4E)/18:0) + CMP-N-acetyl-beta-neuraminate = ganglioside GD1a (18:1(4E)/18:0) + CMP + H(+). It carries out the reaction a ganglioside GA1 + CMP-N-acetyl-beta-neuraminate = a ganglioside GM1b + CMP + H(+). The enzyme catalyses a ganglioside GA1 (d18:1(4E)) + CMP-N-acetyl-beta-neuraminate = a ganglioside GM1b (d18:1(4E)) + CMP + H(+). It catalyses the reaction a globoside GalGb4Cer + CMP-N-acetyl-beta-neuraminate = a globoside MSGG + CMP + H(+). It functions in the pathway protein modification; protein glycosylation. The protein operates within glycolipid biosynthesis. A beta-galactoside alpha2-3 sialyltransferase primarily involved in terminal sialylation of ganglio and globo series glycolipids. Catalyzes the transfer of sialic acid (N-acetyl-neuraminic acid; Neu5Ac) from the nucleotide sugar donor CMP-Neu5Ac onto acceptor Galbeta-(1-&gt;3)-GalNAc-terminated glycoconjugates through an alpha2-3 linkage. Sialylates GM1/GM1a, GA1/asialo-GM1 gangliosides to form GD1a and GM1b, respectively. Together with ST3GAL3, primarily responsible for biosynthesis of brain gangliosides that function as ligand for myelin-associated glycoprotein MAG on axons, regulating MAG expression and axonal myelin stability and regeneration. Responsible for the sialylation of the pluripotent stem cell- and cancer stem cell-associated antigen SSEA3, forming SSEA4. Sialylates with low efficiency asialofetuin, presumably onto O-glycosidically linked Galbeta-(1-&gt;3)-GalNAc-O-Ser. This is CMP-N-acetylneuraminate-beta-galactosamide-alpha-2,3-sialyltransferase 2 (St3gal2) from Rattus norvegicus (Rat).